Consider the following 288-residue polypeptide: ATP synthase gamma chain (288 aa).

Belongs to the ATPase gamma chain family. In terms of assembly, F-type ATPases have 2 components, CF(1) - the catalytic core - and CF(0) - the membrane proton channel. CF(1) has five subunits: alpha(3), beta(3), gamma(1), delta(1), epsilon(1). CF(0) has three main subunits: a, b and c.

The protein resides in the cell inner membrane. Its function is as follows. Produces ATP from ADP in the presence of a proton gradient across the membrane. The gamma chain is believed to be important in regulating ATPase activity and the flow of protons through the CF(0) complex. This is ATP synthase gamma chain from Acidithiobacillus ferrooxidans (strain ATCC 23270 / DSM 14882 / CIP 104768 / NCIMB 8455) (Ferrobacillus ferrooxidans (strain ATCC 23270)).